Consider the following 234-residue polypeptide: Orotidine 5'-phosphate decarboxylase (234 aa).

Residues D17, K38, 65–74 (DLKLHDIPNT), T122, R184, Q193, G213, and R214 each bind substrate. The active-site Proton donor is K67.

This sequence belongs to the OMP decarboxylase family. Type 1 subfamily. In terms of assembly, homodimer.

The catalysed reaction is orotidine 5'-phosphate + H(+) = UMP + CO2. The protein operates within pyrimidine metabolism; UMP biosynthesis via de novo pathway; UMP from orotate: step 2/2. Functionally, catalyzes the decarboxylation of orotidine 5'-monophosphate (OMP) to uridine 5'-monophosphate (UMP). The polypeptide is Orotidine 5'-phosphate decarboxylase (Thermosynechococcus vestitus (strain NIES-2133 / IAM M-273 / BP-1)).